A 447-amino-acid polypeptide reads, in one-letter code: GTPase Der (447 aa).

EngA-type G domains follow at residues 3 to 167 (PVIA…ALPE) and 180 to 353 (IRLA…KSAN). GTP is bound by residues 9–16 (GRPNVGKS), 56–60 (DTGGF), 119–122 (NKAE), 186–193 (GRPNVGKS), 233–237 (DTAGL), and 298–301 (NKWD). The 85-residue stretch at 354-438 (RKMPTPVLTR…PLRIEMKTSS (85 aa)) folds into the KH-like domain.

It belongs to the TRAFAC class TrmE-Era-EngA-EngB-Septin-like GTPase superfamily. EngA (Der) GTPase family. In terms of assembly, associates with the 50S ribosomal subunit.

GTPase that plays an essential role in the late steps of ribosome biogenesis. The sequence is that of GTPase Der from Acidovorax sp. (strain JS42).